A 257-amino-acid polypeptide reads, in one-letter code: Gene 3 protein (257 aa).

Polar residues predominate over residues 163 to 176 (STENLLGQTQSSTH). The segment at 163–257 (STENLLGQTQ…SDSSVSSVFF (95 aa)) is disordered. The segment covering 214 to 240 (SIREETVSGMARAREECNSPSEHDRLT) has biased composition (basic and acidic residues).

The sequence is that of Gene 3 protein from Equine herpesvirus 1 (strain Ab4p) (EHV-1).